We begin with the raw amino-acid sequence, 492 residues long: MASTVRPSFSLGNETLKVPLALFALNRQRLCERLRKNGAVQAGSAVVLQGGEEMQRYCTDTSIIFRQESFFHWAFGVIESGCYGVIDVDTGKSTLFVPRLPASYATWMGKIHSKEHFKEKYAVDDVQYADEIASVLTSRNPSVLLTLRGVNTDSGNVCREASFEGISKFTVNNTILHPEIVECRVFKTDMELEVLRYTNRISSEAHREVMKAVKVGMKEYEMESLFQHYCYSKGGMRHTSYTCICCSGENAAVLHYGHAGAPNDRTIKDGDICLFDMGGEYYCFASDITCSFPANGKFTDDQKAIYEAVLRSCRTVMSTMKPGVWWPDMHRLADRIHLEELTRIGLLSGSVDAMLQVHLGAVFMPHGLGHFLGLDVHDVGGYPEGVERIDEPGLRSLRTARHLEPGMVLTVEPGIYFIDHLLDQALADPAQACFFNQEVLQRFRNFGGVRIEEDVVVTDSGMELLTCVPRTVEEIEACMAGCDKALAPSGPK.

Alanine 2 bears the N-acetylalanine mark. Serine 167 carries the post-translational modification Phosphoserine. A dipeptide is bound at residue histidine 255. Aspartate 276, aspartate 287, and histidine 370 together coordinate Mn(2+). Aspartate 287 contacts a dipeptide. Histidine 377 and arginine 398 together coordinate a dipeptide. Mn(2+) is bound by residues glutamate 412 and glutamate 452.

This sequence belongs to the peptidase M24B family. Eukaryotic-type prolidase subfamily. Homodimer. Mn(2+) serves as cofactor.

The enzyme catalyses Xaa-L-Pro dipeptide + H2O = an L-alpha-amino acid + L-proline. In terms of biological role, dipeptidase that catalyzes the hydrolysis of dipeptides with a prolyl (Xaa-Pro) or hydroxyprolyl residue in the C-terminal position. The preferred dipeptide substrate is Gly-Pro, but other Xaa-Pro dipeptides, such as Ala-Pro, Met-Pro, Phe-Pro, Val-Pro and Leu-Pro, can be cleaved. Plays an important role in collagen metabolism because the high level of iminoacids in collagen. The sequence is that of Xaa-Pro dipeptidase (Pepd) from Rattus norvegicus (Rat).